We begin with the raw amino-acid sequence, 107 residues long: Iron-sulfur cluster assembly protein CyaY (107 aa).

This sequence belongs to the frataxin family.

Involved in iron-sulfur (Fe-S) cluster assembly. May act as a regulator of Fe-S biogenesis. The sequence is that of Iron-sulfur cluster assembly protein CyaY from Edwardsiella ictaluri (strain 93-146).